The chain runs to 272 residues: DNA repair protein RecO (272 aa).

It belongs to the RecO family.

In terms of biological role, involved in DNA repair and RecF pathway recombination. In Latilactobacillus sakei subsp. sakei (strain 23K) (Lactobacillus sakei subsp. sakei), this protein is DNA repair protein RecO.